We begin with the raw amino-acid sequence, 116 residues long: MGAMAEIQFIRGINEEVVPDVRLTRARDGSSGQAMFYFDNPKIVQEGNLEVTGMYMVDEEGEIVTRDVNAKFINGQPVAIEATYTMRSPQEWDRFIRFMDRYAASHGLGFQKSENS.

This sequence belongs to the Psb28 family. In terms of assembly, part of a photosystem II (PSII) assembly intermediate complex PSII-I; crystallized from a strain deleted of psbJ, it forms monomeric PSII before addition of the oxygen evolving complex. PSII-I includes 3 assembly factors not found in mature PSII (Psb27, Psb28 and Psb34). This protein binds to the cytoplasmic face of D1 and D2 (psbA and psbD), contacting CP47 (psbB) directly above the quinone b-binding site.

The protein resides in the cellular thylakoid membrane. Functionally, a photosystem II (PSII) assembly factor that binds PSII during biogenesis, protecting the complex until water splitting is activated. The chain is Photosystem II assembly factor Psb28 protein from Thermosynechococcus vestitus (strain NIES-2133 / IAM M-273 / BP-1).